The sequence spans 72 residues: Bowman-Birk type trypsin inhibitor (72 aa).

7 disulfides stabilise this stretch: cysteine 12–cysteine 66, cysteine 13–cysteine 28, cysteine 16–cysteine 62, cysteine 18–cysteine 26, cysteine 36–cysteine 43, cysteine 40–cysteine 55, and cysteine 45–cysteine 53.

It belongs to the Bowman-Birk serine protease inhibitor family.

The polypeptide is Bowman-Birk type trypsin inhibitor (Vigna radiata var. radiata (Mung bean)).